A 128-amino-acid chain; its full sequence is Calcitonin gene-related peptide 1 (128 aa).

Residues 1 to 25 (MGFLKFSPFLVVSILLLYQACGLQA) form the signal peptide. Positions 26–80 (VPLRSTLESSPGMAATLSEEEARLLLAALVQNYMQMKVRELEQEQEAEGSSVTAQ) are excised as a propeptide. A disulfide bridge links C84 with C89. At F119 the chain carries Phenylalanine amide. Positions 125–128 (DLQA) are excised as a propeptide.

This sequence belongs to the calcitonin family.

The protein localises to the secreted. Its function is as follows. CGRP1/CALCA is a peptide hormone that induces vasodilation mediated by the CALCRL-RAMP1 receptor complex. Dilates a variety of vessels including the coronary, cerebral and systemic vasculature. Its abundance in the CNS also points toward a neurotransmitter or neuromodulator role. It also elevates platelet cAMP. CGRP1 can also bind and activate CALCR-RAMP1 (AMYR1) receptor complex. The sequence is that of Calcitonin gene-related peptide 1 from Rattus norvegicus (Rat).